The primary structure comprises 305 residues: Aspartate carbamoyltransferase catalytic subunit (305 aa).

Residues Arg-54 and Thr-55 each contribute to the carbamoyl phosphate site. Lys-83 contributes to the L-aspartate binding site. Arg-104, His-132, and Gln-135 together coordinate carbamoyl phosphate. 2 residues coordinate L-aspartate: Arg-165 and Arg-226. The carbamoyl phosphate site is built by Leu-265 and Pro-266.

The protein belongs to the aspartate/ornithine carbamoyltransferase superfamily. ATCase family. Heterooligomer of catalytic and regulatory chains.

The catalysed reaction is carbamoyl phosphate + L-aspartate = N-carbamoyl-L-aspartate + phosphate + H(+). Its pathway is pyrimidine metabolism; UMP biosynthesis via de novo pathway; (S)-dihydroorotate from bicarbonate: step 2/3. Its function is as follows. Catalyzes the condensation of carbamoyl phosphate and aspartate to form carbamoyl aspartate and inorganic phosphate, the committed step in the de novo pyrimidine nucleotide biosynthesis pathway. The protein is Aspartate carbamoyltransferase catalytic subunit of Pyrobaculum calidifontis (strain DSM 21063 / JCM 11548 / VA1).